A 226-amino-acid polypeptide reads, in one-letter code: LysM and putative peptidoglycan-binding domain-containing protein 1 (226 aa).

Ser23 and Ser33 each carry phosphoserine. The LysM domain maps to 40 to 84 (LEHQLEPGDTLAGLALKYGVTMEQIKRTNRLYTNDSIFLKKTLYI). Residues 95 to 156 (NGLDSEEEND…PSHDLSASDF (62 aa)) are disordered. Residues 98–107 (DSEEENDGEE) are compositionally biased toward acidic residues. At Ser99 the chain carries Phosphoserine. The span at 142–151 (QETSTPSHDL) shows a compositional bias: polar residues. Residues Ser165, Ser180, Ser193, and Ser211 each carry the phosphoserine modification. The tract at residues 170-226 (AAAQKLRKGESGVPEEDTGLYPSSPRMQQRAVLGPVPLTRTSRTQTLRDQEDEIFKL) is disordered. Basic and acidic residues predominate over residues 215–226 (TLRDQEDEIFKL).

This chain is LysM and putative peptidoglycan-binding domain-containing protein 1 (Lysmd1), found in Mus musculus (Mouse).